The sequence spans 364 residues: Capsular polysaccharide phosphotransferase cps1A (364 aa).

Belongs to the stealth family.

Its function is as follows. Part of a capsular polysaccharide synthesis locus. This Actinobacillus pleuropneumoniae (Haemophilus pleuropneumoniae) protein is Capsular polysaccharide phosphotransferase cps1A (cps1A).